A 588-amino-acid chain; its full sequence is Aspartate--tRNA ligase (588 aa).

An L-aspartate-binding site is contributed by Glu172. The tract at residues 196–199 (QLFK) is aspartate. Residue Arg218 participates in L-aspartate binding. Residues 218-220 (RDE) and Gln227 contribute to the ATP site. His449 provides a ligand contact to L-aspartate. Glu483 is an ATP binding site. Arg490 is an L-aspartate binding site. ATP is bound at residue 535-538 (GLDR).

It belongs to the class-II aminoacyl-tRNA synthetase family. Type 1 subfamily. Homodimer.

It is found in the cytoplasm. The catalysed reaction is tRNA(Asp) + L-aspartate + ATP = L-aspartyl-tRNA(Asp) + AMP + diphosphate. Functionally, catalyzes the attachment of L-aspartate to tRNA(Asp) in a two-step reaction: L-aspartate is first activated by ATP to form Asp-AMP and then transferred to the acceptor end of tRNA(Asp). The polypeptide is Aspartate--tRNA ligase (Haemophilus influenzae (strain ATCC 51907 / DSM 11121 / KW20 / Rd)).